The chain runs to 582 residues: MKRSMYAGRVREEHIGTTITLKGWVSRRRDLGGLIFIDLRDREGVMQLVINPEEVSSDVMATAERLRSEYVIEVEGFVEARQQANDKLATGMVELKVSALTILNTAKTTPFEIKDDVEVSDDTRLRYRYLDLRRPEMLENFKLRAKVTHSIRNYLDDLEFIDVETPMLTKSTPEGARDYLVPSRVSQGHFYALPQSPQITKQLLMNAGFDRYYQIVKCFRDEDLRGDRQPEFTQVDLETSFLSEQEIQDIVEGMIAKVMKETKEIDVTLPFPRMSYDVAMNSYGSDKPDTRFEMLLQDLTVTVKGIDFKVFSEAPAVKAIVVKGNADRYSRKDIDKLTEFAKQFGAKGLAWVKVTDGQLAGPVAKFLTAIETELSSQLKLAENDLVLFVADTLEVANNTLGALRNRIARDLDMIDQSQFNFLWVVDWPMFEWSEEEGRYMSAHHPFTLPTPESAHELEGDLAKVRAIAYDIVLNGYELGGGSLRINQKEMQERMFKALGFTADEANDQFGFLLEAMDYGFPPHGGLAIGLDRFVMLLAEEDNIREVIAFPKNNKASDPMTQAPSLVSENQLEELSLQIESHD.

An L-aspartate-binding site is contributed by Glu-174. The aspartate stretch occupies residues 198–201; the sequence is QITK. Residue Arg-220 participates in L-aspartate binding. ATP-binding positions include 220–222 and Gln-229; that span reads RDE. His-443 serves as a coordination point for L-aspartate. Glu-477 is an ATP binding site. Arg-484 lines the L-aspartate pocket. 529–532 is an ATP binding site; the sequence is GLDR.

Belongs to the class-II aminoacyl-tRNA synthetase family. Type 1 subfamily. As to quaternary structure, homodimer.

The protein localises to the cytoplasm. It carries out the reaction tRNA(Asp) + L-aspartate + ATP = L-aspartyl-tRNA(Asp) + AMP + diphosphate. Its function is as follows. Catalyzes the attachment of L-aspartate to tRNA(Asp) in a two-step reaction: L-aspartate is first activated by ATP to form Asp-AMP and then transferred to the acceptor end of tRNA(Asp). This chain is Aspartate--tRNA ligase, found in Streptococcus pyogenes serotype M6 (strain ATCC BAA-946 / MGAS10394).